A 377-amino-acid polypeptide reads, in one-letter code: S-adenosylmethionine synthase (377 aa).

H14 lines the ATP pocket. D16 contributes to the Mg(2+) binding site. E42 serves as a coordination point for K(+). Q98 provides a ligand contact to L-methionine. The segment at 98–108 (QSADIALGIDL) is flexible loop. Residues 162-164 (DMK), 228-229 (RF), D237, 243-244 (RK), A260, and K264 contribute to the ATP site. D237 provides a ligand contact to L-methionine. Position 268 (K268) interacts with L-methionine.

The protein belongs to the AdoMet synthase family. As to quaternary structure, homotetramer; dimer of dimers. Requires Mg(2+) as cofactor. It depends on K(+) as a cofactor.

It is found in the cytoplasm. The catalysed reaction is L-methionine + ATP + H2O = S-adenosyl-L-methionine + phosphate + diphosphate. The protein operates within amino-acid biosynthesis; S-adenosyl-L-methionine biosynthesis; S-adenosyl-L-methionine from L-methionine: step 1/1. Its function is as follows. Catalyzes the formation of S-adenosylmethionine (AdoMet) from methionine and ATP. The overall synthetic reaction is composed of two sequential steps, AdoMet formation and the subsequent tripolyphosphate hydrolysis which occurs prior to release of AdoMet from the enzyme. The polypeptide is S-adenosylmethionine synthase (Mesoplasma florum (strain ATCC 33453 / NBRC 100688 / NCTC 11704 / L1) (Acholeplasma florum)).